We begin with the raw amino-acid sequence, 125 residues long: Large ribosomal subunit protein bL12 (125 aa).

This sequence belongs to the bacterial ribosomal protein bL12 family. As to quaternary structure, homodimer. Part of the ribosomal stalk of the 50S ribosomal subunit. Forms a multimeric L10(L12)X complex, where L10 forms an elongated spine to which 2 to 4 L12 dimers bind in a sequential fashion. Binds GTP-bound translation factors.

Functionally, forms part of the ribosomal stalk which helps the ribosome interact with GTP-bound translation factors. Is thus essential for accurate translation. The polypeptide is Large ribosomal subunit protein bL12 (Anaeromyxobacter sp. (strain Fw109-5)).